The following is a 156-amino-acid chain: Ribonuclease H (156 aa).

One can recognise an RNase H type-1 domain in the interval 1 to 142 (MGKQVEIFTD…CDELARAAAN (142 aa)). Mg(2+) contacts are provided by aspartate 10, glutamate 48, aspartate 70, and aspartate 134.

The protein belongs to the RNase H family. Monomer. It depends on Mg(2+) as a cofactor.

Its subcellular location is the cytoplasm. It catalyses the reaction Endonucleolytic cleavage to 5'-phosphomonoester.. In terms of biological role, endonuclease that specifically degrades the RNA of RNA-DNA hybrids. In Photorhabdus luminescens (Xenorhabdus luminescens), this protein is Ribonuclease H.